The chain runs to 373 residues: MRGISRLYWSLVLICFAFAPIVEASSVRLKELARIEGVRENSLFGYGLVVGLAGTGDTHRSKATLQSIANTLQQFGISLDSDEIASRNVAAVTLTAKLPPFANSGDMIDVNVSSMGDARSLVGGTLLLAPLKAVNGKIYAVAQGQVSVGGFSYDLNGNVVQKNHPTVGVIPSGASVERGLSTDLVGADGHINVILNQPDFTTASRIKNAINKTLGPGKARAVHAGKISVVAPAGEYDLVDYLTRIENSVIEPDRIATVVVNERTGTVVAGGDVTIDNVTISHGNIKVVISTDYQVSQPVFVREPGRGVSTVVVPDTSIDIEESVAEPVRLSSGASIADLVTALRQIKTSTRDVITILQLIKTAGALHAQLVIQ.

The signal sequence occupies residues 1–24; sequence MRGISRLYWSLVLICFAFAPIVEA.

This sequence belongs to the FlgI family. In terms of assembly, the basal body constitutes a major portion of the flagellar organelle and consists of four rings (L,P,S, and M) mounted on a central rod.

It is found in the periplasm. It localises to the bacterial flagellum basal body. Functionally, assembles around the rod to form the L-ring and probably protects the motor/basal body from shearing forces during rotation. This Hahella chejuensis (strain KCTC 2396) protein is Flagellar P-ring protein 1.